The chain runs to 68 residues: C-hordein (68 aa).

Pro residues-rich tracts occupy residues 1-24 and 33-55; these read YPQQPQPFPQQPIPQQPQPYPQQP and PQQPQPYPQQPQPFPQQPIPLQP. The tract at residues 1–68 is disordered; it reads YPQQPQPFPQ…YTQQTIWSMV (68 aa). A compositionally biased stretch (polar residues) spans 59-68; that stretch reads YTQQTIWSMV.

Developing endosperm.

In terms of biological role, sulfur-poor seed storage protein. This chain is C-hordein, found in Hordeum vulgare (Barley).